Consider the following 495-residue polypeptide: L-arabinose isomerase (495 aa).

Positions 305, 332, 349, and 448 each coordinate Mn(2+).

The protein belongs to the arabinose isomerase family. Mn(2+) serves as cofactor.

The catalysed reaction is beta-L-arabinopyranose = L-ribulose. It functions in the pathway carbohydrate degradation; L-arabinose degradation via L-ribulose; D-xylulose 5-phosphate from L-arabinose (bacterial route): step 1/3. Its function is as follows. Catalyzes the conversion of L-arabinose to L-ribulose. The protein is L-arabinose isomerase of Actinobacillus succinogenes (strain ATCC 55618 / DSM 22257 / CCUG 43843 / 130Z).